Reading from the N-terminus, the 62-residue chain is Amolopin-p-MT1 (62 aa).

Residues 1–22 form the signal peptide; sequence MFTLKKSLLLLFFLGTISLSLC. The propeptide at 23 to 42 is removed in mature form; sequence EQERGADEEENGGEVTEEEV.

Belongs to the frog skin active peptide (FSAP) family. Brevinin subfamily. As to expression, expressed by the skin glands.

The protein resides in the secreted. Its function is as follows. Antimicrobial peptide. Active against a variety of Gram-negative and Gram-positive bacterial strains. Not active against fungi. Shows weak hemolytic activity against human erythrocytes. In Amolops mantzorum (Sichuan torrent frog), this protein is Amolopin-p-MT1.